A 97-amino-acid chain; its full sequence is Large ribosomal subunit protein uL23 (97 aa).

Belongs to the universal ribosomal protein uL23 family. Part of the 50S ribosomal subunit. Contacts protein L29, and trigger factor when it is bound to the ribosome.

One of the early assembly proteins it binds 23S rRNA. One of the proteins that surrounds the polypeptide exit tunnel on the outside of the ribosome. Forms the main docking site for trigger factor binding to the ribosome. The polypeptide is Large ribosomal subunit protein uL23 (Brucella suis (strain ATCC 23445 / NCTC 10510)).